The following is a 177-amino-acid chain: Translation initiation factor IF-3 (177 aa).

It belongs to the IF-3 family. In terms of assembly, monomer.

It localises to the cytoplasm. Its function is as follows. IF-3 binds to the 30S ribosomal subunit and shifts the equilibrium between 70S ribosomes and their 50S and 30S subunits in favor of the free subunits, thus enhancing the availability of 30S subunits on which protein synthesis initiation begins. The chain is Translation initiation factor IF-3 from Acaryochloris marina (strain MBIC 11017).